A 295-amino-acid polypeptide reads, in one-letter code: Deoxyuridine 5'-triphosphate nucleotidohydrolase (295 aa).

Residue 178–180 (RSG) participates in substrate binding. Positions 260-272 (NSVRKHTHEDNPV) are enriched in basic and acidic residues. A disordered region spans residues 260-295 (NSVRKHTHEDNPVHEPNVATASADIRGTKGLGSSGF).

Belongs to the dUTPase family. The cofactor is Mg(2+).

The catalysed reaction is dUTP + H2O = dUMP + diphosphate + H(+). Its function is as follows. Involved in nucleotide metabolism: produces dUMP, the immediate precursor of thymidine nucleotides and decreases the intracellular concentration of dUTP to avoid uracil incorporation into viral DNA. This Human herpesvirus 8 type P (isolate GK18) (HHV-8) protein is Deoxyuridine 5'-triphosphate nucleotidohydrolase.